The following is a 796-amino-acid chain: Putative aconitate hydratase, mitochondrial (796 aa).

The N-terminal 28 residues, 1–28 (MLRQIVSQRSAARRQLIDQLAPCLRRGL), are a transit peptide targeting the mitochondrion. Substrate contacts are provided by residues Gln-108 and 201–203 (DSH). 3 residues coordinate [4Fe-4S] cluster: Cys-399, Cys-462, and Cys-465. Substrate-binding residues include Arg-489 and Arg-494. Positions 540–569 (EPPTGQDLPSKGFEAGNPAFQPSAPVPDSS) are disordered. 685–686 (AR) lines the substrate pocket.

The protein belongs to the aconitase/IPM isomerase family.

Its subcellular location is the mitochondrion. In terms of biological role, has no detectable activity towards cis-acontiate or cis-homoaconitate. This chain is Putative aconitate hydratase, mitochondrial (acoB), found in Emericella nidulans (strain FGSC A4 / ATCC 38163 / CBS 112.46 / NRRL 194 / M139) (Aspergillus nidulans).